We begin with the raw amino-acid sequence, 262 residues long: tRNA pseudouridine synthase A 2 (262 aa).

The active-site Nucleophile is the Asp-66. Residue Tyr-125 participates in substrate binding.

This sequence belongs to the tRNA pseudouridine synthase TruA family. Homodimer.

It catalyses the reaction uridine(38/39/40) in tRNA = pseudouridine(38/39/40) in tRNA. In terms of biological role, formation of pseudouridine at positions 38, 39 and 40 in the anticodon stem and loop of transfer RNAs. In Protochlamydia amoebophila (strain UWE25), this protein is tRNA pseudouridine synthase A 2.